Reading from the N-terminus, the 235-residue chain is Sugar fermentation stimulation protein homolog (235 aa).

Belongs to the SfsA family.

The sequence is that of Sugar fermentation stimulation protein homolog from Aliivibrio fischeri (strain MJ11) (Vibrio fischeri).